Reading from the N-terminus, the 269-residue chain is Formamidopyrimidine-DNA glycosylase (269 aa).

Pro-2 serves as the catalytic Schiff-base intermediate with DNA. Glu-3 serves as the catalytic Proton donor. Lys-57 serves as the catalytic Proton donor; for beta-elimination activity. DNA is bound by residues His-90, Arg-109, and Lys-150. Residues 235–269 (QVYGRKGEPCRVCGTPIVATKHAQRATFYCRHCQK) form an FPG-type zinc finger. Catalysis depends on Arg-259, which acts as the Proton donor; for delta-elimination activity.

The protein belongs to the FPG family. As to quaternary structure, monomer. Zn(2+) is required as a cofactor.

The enzyme catalyses Hydrolysis of DNA containing ring-opened 7-methylguanine residues, releasing 2,6-diamino-4-hydroxy-5-(N-methyl)formamidopyrimidine.. The catalysed reaction is 2'-deoxyribonucleotide-(2'-deoxyribose 5'-phosphate)-2'-deoxyribonucleotide-DNA = a 3'-end 2'-deoxyribonucleotide-(2,3-dehydro-2,3-deoxyribose 5'-phosphate)-DNA + a 5'-end 5'-phospho-2'-deoxyribonucleoside-DNA + H(+). In terms of biological role, involved in base excision repair of DNA damaged by oxidation or by mutagenic agents. Acts as a DNA glycosylase that recognizes and removes damaged bases. Has a preference for oxidized purines, such as 7,8-dihydro-8-oxoguanine (8-oxoG). Has AP (apurinic/apyrimidinic) lyase activity and introduces nicks in the DNA strand. Cleaves the DNA backbone by beta-delta elimination to generate a single-strand break at the site of the removed base with both 3'- and 5'-phosphates. This is Formamidopyrimidine-DNA glycosylase from Salmonella dublin (strain CT_02021853).